A 131-amino-acid polypeptide reads, in one-letter code: Arsenate reductase (131 aa).

Active-site nucleophile residues include Cys10, Cys82, and Cys89. Intrachain disulfides connect Cys10-Cys82 and Cys82-Cys89.

It belongs to the low molecular weight phosphotyrosine protein phosphatase family. Thioredoxin-coupled ArsC subfamily.

The protein localises to the cytoplasm. It carries out the reaction arsenate + [thioredoxin]-dithiol + H(+) = arsenite + [thioredoxin]-disulfide + H2O. In terms of biological role, catalyzes the reduction of arsenate [As(V)] to arsenite [As(III)]. The sequence is that of Arsenate reductase from Staphylococcus aureus (strain COL).